Here is a 698-residue protein sequence, read N- to C-terminus: Cytoplasmic polyadenylation element-binding protein 3 (698 aa).

The segment covering Met-1–Lys-11 has biased composition (basic and acidic residues). 2 disordered regions span residues Met-1 to Gly-114 and Ala-158 to Ala-208. Low complexity predominate over residues Gln-13 to Pro-28. Residues Glu-29–Thr-44 show a composition bias toward polar residues. Positions Pro-87–Pro-96 are enriched in pro residues. Polar residues predominate over residues Leu-103–Gly-114. Residues Gln-165 to Gln-185 show a composition bias toward pro residues. The span at Pro-186 to Ala-208 shows a compositional bias: low complexity. Ser-192, Ser-195, and Ser-290 each carry phosphoserine. Arg-308 is modified (asymmetric dimethylarginine). 2 consecutive RRM domains span residues Arg-441 to Leu-532 and Lys-549 to Leu-631.

The protein belongs to the RRM CPEB family. In terms of assembly, following synaptic activity, forms amyloid-like oligomers. Aggregation requires an intact actin cytoskeleton. Interacts with STAT5B; this inhibits STAT5B-mediated transcriptional activation. Interacts with E3 ubiquitin-protein ligase NEURL1; this leads to monoubiquitination and activation of CPEB3. Interacts with CAPN2; this leads to cleavage of CPEB3. Interacts (via C-terminal RNA-binding region) with TOB1; TOB1 also binds CNOT7/CAF1 and recruits it to CPEB3 to form a ternary complex. Interacts with SUMO-conjugating enzyme UBC9. Interacts with IPO5; the interaction is enhanced in a RAN-regulated manner following neuronal stimulation and mediates CPEB3 nuclear import. Interacts with exportin XPO1/CRM1. Post-translationally, activated by NEURL1-mediated monoubiquitination, resulting in the growth of new dendritic spines and increased levels of GRIA1 and GRIA2. NEURL1-mediated monoubiquitination facilitates synaptic plasticity and hippocampal-dependent memory storage. In terms of processing, under basal unstimulated conditions when CPEB3 is mainly unaggregated, sumoylated and acts as a translational repressor. Following neuronal stimulation, becomes desumoylated and aggregated which is required for the translation of mRNA targets and for dendritic filopodia formation. Following neuronal stimulation, cleaved by CAPN2 which abolishes its translational repressor activity, leading to translation of CPEB3 target mRNAs. Post-translationally, phosphorylation is enhanced by neuronal stimulation.

The protein localises to the cytoplasm. It is found in the nucleus. Its subcellular location is the synapse. The protein resides in the cell projection. It localises to the dendrite. The protein localises to the postsynaptic density. Sequence-specific RNA-binding protein which acts as a translational repressor in the basal unstimulated state but, following neuronal stimulation, acts as a translational activator. In contrast to CPEB1, does not bind to the cytoplasmic polyadenylation element (CPE), a uridine-rich sequence element within the mRNA 3'-UTR, but binds to a U-rich loop within a stem-loop structure. Required for the consolidation and maintenance of hippocampal-based long term memory. In the basal state, binds to the mRNA 3'-UTR of the glutamate receptors GRIA2/GLUR2 mRNA and negatively regulates their translation. Also represses the translation of DLG4, GRIN1, GRIN2A and GRIN2B. When activated, acts as a translational activator of GRIA1 and GRIA2. In the basal state, suppresses SUMO2 translation but activates it following neuronal stimulation. Binds to the 3'-UTR of TRPV1 mRNA and represses TRPV1 translation which is required to maintain normal thermoception. Binds actin mRNA, leading to actin translational repression in the basal state and to translational activation following neuronal stimulation. Negatively regulates target mRNA levels by binding to TOB1 which recruits CNOT7/CAF1 to a ternary complex and this leads to target mRNA deadenylation and decay. In addition to its role in translation, binds to and inhibits the transcriptional activation activity of STAT5B without affecting its dimerization or DNA-binding activity. This, in turn, represses transcription of the STAT5B target gene EGFR which has been shown to play a role in enhancing learning and memory performance. In contrast to CPEB1, CPEB2 and CPEB4, not required for cell cycle progression. The chain is Cytoplasmic polyadenylation element-binding protein 3 (CPEB3) from Homo sapiens (Human).